A 126-amino-acid polypeptide reads, in one-letter code: Major sperm protein 2 (126 aa).

At alanine 2 the chain carries N-acetylalanine. An MSP domain is found at 8–125 (DIATMPNQKV…RRKNLPIEYN (118 aa)).

Sperm.

The protein resides in the cell projection. It localises to the pseudopodium. Its subcellular location is the cytoplasm. The protein localises to the cytoskeleton. Its function is as follows. Central component in molecular interactions underlying sperm crawling. Forms an extensive filament system that extends from sperm villipoda, along the leading edge of the pseudopod. This is Major sperm protein 2 (MSP-2) from Globodera rostochiensis (Golden nematode worm).